A 118-amino-acid polypeptide reads, in one-letter code: Myotrophin (118 aa).

ANK repeat units follow at residues 1–30 (MGDK…DVNR), 34–65 (GGRK…NAAD), and 67–98 (HGIT…NVKG).

The protein belongs to the myotrophin family.

It localises to the cytoplasm. The protein localises to the nucleus. The protein resides in the perinuclear region. Its function is as follows. Regulates NF-kappa-B transcription factor activity. Promotes growth of cardiomyocytes, but not cardiomyocyte proliferation. Promotes cardiac muscle hypertrophy. Plays a role in the regulation of the growth of actin filaments. Inhibits the activity of the F-actin-capping protein complex. This Xenopus laevis (African clawed frog) protein is Myotrophin (mtpn).